A 285-amino-acid polypeptide reads, in one-letter code: Bifunctional protein FolD (285 aa).

NADP(+)-binding positions include 165–167 (GRS), serine 190, and isoleucine 231.

It belongs to the tetrahydrofolate dehydrogenase/cyclohydrolase family. In terms of assembly, homodimer.

It carries out the reaction (6R)-5,10-methylene-5,6,7,8-tetrahydrofolate + NADP(+) = (6R)-5,10-methenyltetrahydrofolate + NADPH. It catalyses the reaction (6R)-5,10-methenyltetrahydrofolate + H2O = (6R)-10-formyltetrahydrofolate + H(+). Its pathway is one-carbon metabolism; tetrahydrofolate interconversion. In terms of biological role, catalyzes the oxidation of 5,10-methylenetetrahydrofolate to 5,10-methenyltetrahydrofolate and then the hydrolysis of 5,10-methenyltetrahydrofolate to 10-formyltetrahydrofolate. The polypeptide is Bifunctional protein FolD (Alkaliphilus oremlandii (strain OhILAs) (Clostridium oremlandii (strain OhILAs))).